Here is a 330-residue protein sequence, read N- to C-terminus: Polyprenal reductase (330 aa).

Residues Met1–Arg16 lie on the Cytoplasmic side of the membrane. A helical membrane pass occupies residues Ala17–Ala37. Residues Arg38–Ser89 lie on the Lumenal side of the membrane. The helical transmembrane segment at Leu90–Ala110 threads the bilayer. Residues Leu111 to Lys136 are Cytoplasmic-facing. Residues Leu137–Phe157 form a helical membrane-spanning segment. Over Glu158 to Ala169 the chain is Lumenal. The helical transmembrane segment at Ile170–Leu190 threads the bilayer. The Cytoplasmic portion of the chain corresponds to Ser191–Asn206. The helical transmembrane segment at Leu207–Ala227 threads the bilayer. The Lumenal segment spans residues His228–Ser277. Residues Met278–Phe298 form a helical membrane-spanning segment. The Cytoplasmic segment spans residues Ser299–Phe330.

Belongs to the steroid 5-alpha reductase family. Polyprenal reductase subfamily. Expressed in the 2 tissues tested i.e. testis and liver.

Its subcellular location is the endoplasmic reticulum membrane. The catalysed reaction is a di-trans,poly-cis-dolichal + NADP(+) = a di-trans,poly-cis-polyprenal + NADPH + H(+). The enzyme catalyses a 3-oxo-5alpha-steroid + NADP(+) = a 3-oxo-Delta(4)-steroid + NADPH + H(+). It carries out the reaction androst-4-ene-3,17-dione + NADPH + H(+) = 5alpha-androstan-3,17-dione + NADP(+). It catalyses the reaction 17beta-hydroxy-5alpha-androstan-3-one + NADP(+) = testosterone + NADPH + H(+). Its pathway is protein modification; protein glycosylation. Its function is as follows. Plays a key role in early steps of protein N-linked glycosylation by being involved in the conversion of polyprenol into dolichol. Acts as a polyprenal reductase that mediates the reduction of polyprenal into dolichal in a NADP-dependent mechanism. Dolichols are required for the synthesis of dolichol-linked monosaccharides and the oligosaccharide precursor used for N-glycosylation. Also able to convert testosterone (T) into 5-alpha-dihydrotestosterone (DHT). The chain is Polyprenal reductase from Rattus norvegicus (Rat).